A 24-amino-acid chain; its full sequence is Coenzyme PQQ synthesis protein A (24 aa).

The segment at residues 16–20 (EVTMY) is a cross-link (pyrroloquinoline quinone (Glu-Tyr)).

The protein belongs to the PqqA family.

Its pathway is cofactor biosynthesis; pyrroloquinoline quinone biosynthesis. Its function is as follows. Required for coenzyme pyrroloquinoline quinone (PQQ) biosynthesis. PQQ is probably formed by cross-linking a specific glutamate to a specific tyrosine residue and excising these residues from the peptide. The polypeptide is Coenzyme PQQ synthesis protein A (Pseudomonas fluorescens (strain Pf0-1)).